The primary structure comprises 157 residues: Ribosome-binding factor A (157 aa).

A disordered region spans residues 127–157 (QQQFGSEEASVEDEVLGDDVADDADETEGKD). Residues 135-157 (ASVEDEVLGDDVADDADETEGKD) are compositionally biased toward acidic residues.

It belongs to the RbfA family. In terms of assembly, monomer. Binds 30S ribosomal subunits, but not 50S ribosomal subunits or 70S ribosomes.

It is found in the cytoplasm. Functionally, one of several proteins that assist in the late maturation steps of the functional core of the 30S ribosomal subunit. Associates with free 30S ribosomal subunits (but not with 30S subunits that are part of 70S ribosomes or polysomes). Required for efficient processing of 16S rRNA. May interact with the 5'-terminal helix region of 16S rRNA. The sequence is that of Ribosome-binding factor A from Shewanella baltica (strain OS195).